The primary structure comprises 899 residues: Translation initiation factor IF-2 (899 aa).

Disordered stretches follow at residues 94–167 (TFTK…VVVK) and 259–309 (FNQE…HGFE). Residues 107–121 (AKARQETEERTRPQE) show a composition bias toward basic and acidic residues. Residues 147 to 164 (RAAQQKETAKTTSTTTEV) are compositionally biased toward low complexity. In terms of domain architecture, tr-type G spans 399–568 (TRPPVVTIMG…LIQSELMELK (170 aa)). The segment at 408-415 (GHVDHGKT) is G1. Position 408 to 415 (408 to 415 (GHVDHGKT)) interacts with GTP. Residues 433-437 (GITQH) form a G2 region. The interval 454–457 (DTPG) is G3. Residues 454-458 (DTPGH) and 508-511 (NKMD) contribute to the GTP site. Positions 508 to 511 (NKMD) are G4. The interval 544–546 (SAH) is G5.

It belongs to the TRAFAC class translation factor GTPase superfamily. Classic translation factor GTPase family. IF-2 subfamily.

The protein resides in the cytoplasm. Its function is as follows. One of the essential components for the initiation of protein synthesis. Protects formylmethionyl-tRNA from spontaneous hydrolysis and promotes its binding to the 30S ribosomal subunits. Also involved in the hydrolysis of GTP during the formation of the 70S ribosomal complex. This is Translation initiation factor IF-2 from Acinetobacter baylyi (strain ATCC 33305 / BD413 / ADP1).